We begin with the raw amino-acid sequence, 187 residues long: Large ribosomal subunit protein uL5 (187 aa).

The protein belongs to the universal ribosomal protein uL5 family. As to quaternary structure, part of the 50S ribosomal subunit; part of the 5S rRNA/L5/L18/L25 subcomplex. Contacts the 5S rRNA and the P site tRNA. Forms a bridge to the 30S subunit in the 70S ribosome.

This is one of the proteins that bind and probably mediate the attachment of the 5S RNA into the large ribosomal subunit, where it forms part of the central protuberance. In the 70S ribosome it contacts protein S13 of the 30S subunit (bridge B1b), connecting the 2 subunits; this bridge is implicated in subunit movement. Contacts the P site tRNA; the 5S rRNA and some of its associated proteins might help stabilize positioning of ribosome-bound tRNAs. This Mycobacterium avium (strain 104) protein is Large ribosomal subunit protein uL5.